The following is a 187-amino-acid chain: Large ribosomal subunit protein bL9 (187 aa).

The segment at 168-187 is disordered; the sequence is EEAPAEEDVAAEETSEAAEA.

The protein belongs to the bacterial ribosomal protein bL9 family.

Functionally, binds to the 23S rRNA. The polypeptide is Large ribosomal subunit protein bL9 (Paramagnetospirillum magneticum (strain ATCC 700264 / AMB-1) (Magnetospirillum magneticum)).